Here is a 581-residue protein sequence, read N- to C-terminus: MQYSHHCEHLLERLNKQREAGFLCDCTIVIGEFQFKAHRNVLASFSEYFGAIYRSTSENNVFLDQSQVKADGFQKLLEFIYTGTLNLDSWNVKEIHQAADYLKVEEVVTKCKIKMEDFAFIANPSSTEISSITGNIELNQQTCLLTLRDYNSREKSEVSTDLVQANPKQGALAKKSSQTKKKKKAFNSQKTGQNKTVQYPSDILENASVELFLDANKLSTPIIEQVAQRSNSELELTSVVENTFPAQDIVQTVTVKRKRGKSQPNCALKEHSMSNIASVKNSYELESSGEELDQRYSKAKPMCNTCGKVFSEASSLRRHMRIHKGVKPYVCHLCGKAFTQCNQLKTHVRTHTGEKPYKCELCDKGFAQKCQLVFHSRMHHGEEKPYKCDVCNLQFATSSNLKIHARKHSGEKPYVCDRCGQRFAQASTLTYHVRRHTGEKPYVCDTCGKAFAVSSSLITHSRKHTGERPFICELCGNSYTDIKNLKKHKTKVHSGADKILDSSIEDHPLNEQDSIQKSPLSETLDVKPSDVTLPLTLPLGAEDHHLLLPVADSQPPAPDALLRPAANGYSEPQLIFLQQLY.

Residues 24–89 (CDCTIVIGEF…IYTGTLNLDS (66 aa)) form the BTB domain. Residues 167–193 (PKQGALAKKSSQTKKKKKAFNSQKTGQ) are disordered. 2 short sequence motifs (nuclear localization signal) span residues 174 to 190 (KKSS…NSQK) and 256 to 261 (KRKRGK). At S288 the chain carries Phosphoserine. 7 consecutive C2H2-type zinc fingers follow at residues 301–323 (PMCN…MRIH), 329–351 (YVCH…VRTH), 357–380 (YKCE…RMHH), 386–408 (YKCD…ARKH), 414–436 (YVCD…VRRH), 442–464 (YVCD…SRKH), and 470–493 (FICE…TKVH).

It belongs to the krueppel C2H2-type zinc-finger protein family.

The protein localises to the nucleus. The polypeptide is Myoneurin (MYNN) (Bos taurus (Bovine)).